Consider the following 180-residue polypeptide: Chromosome-anchoring protein RacA (180 aa).

Residues 5 to 25 (TPFIAKKLGVSPKAVVRIAQQ) constitute a DNA-binding region (H-T-H motif). Residues 67–151 (KASSNEVEEL…LEAALTKEEP (85 aa)) are a coiled coil.

The protein belongs to the RacA family.

Its subcellular location is the cytoplasm. In terms of biological role, required for the formation of axial filaments and for anchoring the origin regions at the cell poles in sporulating cells, thus ensuring proper chromosome segregation in the prespore. Binds in a dispersed manner throughout the chromosome but preferentially to sites clustered in the origin portion of the chromosome, causing condensation of the chromosome and its remodeling into an elongated, anchored structure. This is Chromosome-anchoring protein RacA from Bacillus cereus (strain B4264).